An 838-amino-acid polypeptide reads, in one-letter code: MEDDDQQKAADLVQELVLRLVSQNPQTPNLDPNSPAFLKTLRYAFRILSSRLTPSVLPDATAIAESLKRRLATQGKSSDALAFADLYTKFASKTGPGSVNNKWALVYLLKIVSDDRKSAINGLDSSVLLPNLGIGDTGNGVLSRGEAKKKDWSNGVLLVSKDPENLRDIAFREYAILVKEENEVTEEVLVRDVLYASQGIDGKYVKFNSEIDGYAVQESVKVPRATRIMVRMLSELGWLFRKVKTFITESMDRFPAEDVGTVGQAFCAALQDELSDYYKLLAVLEAQAMNPIPLVSESASSNNYLSLRRLSVWFAEPMVKMRLMAVLVDKCKVLRGGAMAGAIHLHAQHGDPLVHDFMMSLLRCVCSPLFEMVRSWVLEGELEDTFGEFFVVGQPVKVDLLWREGYKLHPAMLPSFISPSLAQRILRTGKSINFLRVCCDDHGWADAASEAAAASGTTTRRGGLGYGETDALEHLVTEAAKRIDKHLLDVLYKRYKFKEHCLAIKRYLLLGQGDFVQYLMDIVGPKLSEPANNISSFELAGFLEAAIRASNAQYDDRDMLDRLRVKMMPHGSGDRGWDVFSLEYEARVPLDTVFTESVLSKYLRVFNFLWKLKRVEHALIGIWKTMKPNCITSNSFVKLQSSVKLQLLSALRRCQVLWNEMNHFVTNFQYYIMFEVLEVSWSNFSKEMEAAKDLDDLLAAHEKYLNAIVGKSLLGEQSQTIRESLFVLFELILRFRSHADRLYEGIHELQIRSKESGREKNKSQEPGSWISEGRKGLTQRAGEFLQSMSQDMDSIAKEYTSSLDGFLSLLPLQQSVDLKFLFFRLDFTEFYSRLHSKG.

The tract at residues 1-199 (MEDDDQQKAA…VRDVLYASQG (199 aa)) is mediates interactions with GIP1 and GIP2. A triggers nucleus envelope localization region spans residues 200 to 256 (IDGKYVKFNSEIDGYAVQESVKVPRATRIMVRMLSELGWLFRKVKTFITESMDRFPA).

Belongs to the TUBGCP family. As to quaternary structure, part of the gamma-tubulin complex. Gamma-tubulin complex is composed of gamma-tubulin and GCP proteins. Interacts directly with GCP2, GIP1 and GIP2.

The protein resides in the cytoplasm. It localises to the cytoskeleton. Its subcellular location is the microtubule organizing center. It is found in the nucleus envelope. The protein localises to the cell cortex. The protein resides in the spindle. Functionally, gamma-tubulin complex is necessary for microtubule nucleation at the microtubule organizing centers (MTOCs). Required for the positioning of the gamma-tubulin-containing complex on pre-existing microtubules and for the proper organization of cortical arrays. In terms of biological role, gamma-tubulin complex is essential for the control of microtubular network remodeling in the course of initiation and development of giant-feeding cells, and for the successful reproduction of nematodes (e.g. Meloidogyne spp.) in their plant hosts. In Arabidopsis thaliana (Mouse-ear cress), this protein is Gamma-tubulin complex component 3 (GCP3).